Here is a 725-residue protein sequence, read N- to C-terminus: Catalase-peroxidase (725 aa).

The segment at residues Trp90 to Tyr213 is a cross-link (tryptophyl-tyrosyl-methioninium (Trp-Tyr) (with M-239)). The Proton acceptor role is filled by His91. The segment at residues Tyr213–Met239 is a cross-link (tryptophyl-tyrosyl-methioninium (Tyr-Met) (with W-90)). His254 lines the heme b pocket.

Belongs to the peroxidase family. Peroxidase/catalase subfamily. As to quaternary structure, homodimer or homotetramer. Requires heme b as cofactor. In terms of processing, formation of the three residue Trp-Tyr-Met cross-link is important for the catalase, but not the peroxidase activity of the enzyme.

The catalysed reaction is H2O2 + AH2 = A + 2 H2O. It carries out the reaction 2 H2O2 = O2 + 2 H2O. Its function is as follows. Bifunctional enzyme with both catalase and broad-spectrum peroxidase activity. This is Catalase-peroxidase from Hahella chejuensis (strain KCTC 2396).